Reading from the N-terminus, the 383-residue chain is Heme chaperone HemW (383 aa).

Residues 1 to 241 (MPKLPPLSLY…LTMAGYQQYE (241 aa)) enclose the Radical SAM core domain. Residue tyrosine 10 participates in S-adenosyl-L-methionine binding. Positions 16, 20, and 23 each coordinate [4Fe-4S] cluster. S-adenosyl-L-methionine-binding positions include glycine 70, 71–72 (GT), glutamate 103, glutamine 130, arginine 142, and aspartate 167.

Belongs to the anaerobic coproporphyrinogen-III oxidase family. HemW subfamily. Requires [4Fe-4S] cluster as cofactor.

Its subcellular location is the cytoplasm. Its function is as follows. Probably acts as a heme chaperone, transferring heme to an unknown acceptor. Binds one molecule of heme per monomer, possibly covalently. Binds 1 [4Fe-4S] cluster. The cluster is coordinated with 3 cysteines and an exchangeable S-adenosyl-L-methionine. The protein is Heme chaperone HemW of Haemophilus influenzae (strain ATCC 51907 / DSM 11121 / KW20 / Rd).